We begin with the raw amino-acid sequence, 1226 residues long: Polyamine-transporting ATPase 13A3 (1226 aa).

Over 1-28 (MDREERKTINQGQEDEMEIYGYNLSRWK) the chain is Cytoplasmic. Residues 29–49 (LAIVSLGVICSGGFLLLLLYW) lie within the membrane without spanning it. At 50–205 (MPEWRVKATC…IAVKVPSVFK (156 aa)) the chain is on the cytoplasmic side. Ser-98 carries the phosphoserine modification. Residues 206–226 (LLIKEVLNPFYIFQLFSVILW) traverse the membrane as a helical segment. Residues 227 to 232 (STDEYY) lie on the Lumenal side of the membrane. A helical transmembrane segment spans residues 233-253 (YYALAIVVMSIVSIVSSLYSI). Over 254–409 (RKQYVMLHDM…KPTDFKLYRD (156 aa)) the chain is Cytoplasmic. A helical transmembrane segment spans residues 410–430 (AYLFLLCLVAVAGIGFIYTII). Residues 431 to 448 (NSILNEVQVGVIIIESLD) are Lumenal-facing. The chain crosses the membrane as a helical span at residues 449–469 (IITITVPPALPAAMTAGIVYA). Residues 470–940 (QRRLKKIGIF…ALITSFCVFK (471 aa)) lie on the Cytoplasmic side of the membrane. Asp-498 (4-aspartylphosphate intermediate) is an active-site residue. 2 residues coordinate Mg(2+): Asp-498 and Thr-500. ATP is bound by residues 498–500 (DKT), Phe-628, Arg-684, and Asp-750. Ser-817 carries the phosphoserine modification. Residues Asp-883 and Asp-887 each contribute to the Mg(2+) site. 883–887 (DGAND) contacts ATP. Residues 941-961 (FMALYSIIQYFSVTLLYSILS) traverse the membrane as a helical segment. Residue Asn-962 is a topological domain, lumenal. The chain crosses the membrane as a helical span at residues 963-983 (LGDFQFLFIDLAIILVVVFTM). Residues 984-999 (SLNPAWKELVAQRPPS) lie on the Cytoplasmic side of the membrane. Residues 1000–1020 (GLISGALLFSVLSQIIICIGF) traverse the membrane as a helical segment. Topologically, residues 1021 to 1073 (QSLGFFWVKQQPWYEVWHPKSDACNTTGSGFWNSSHVDNETELDEHNIQNYEN) are lumenal. A helical membrane pass occupies residues 1074–1094 (TTVFFISSFQYLIVAIAFSKG). Residues 1095–1105 (KPFRQPCYKNY) lie on the Cytoplasmic side of the membrane. The chain crosses the membrane as a helical span at residues 1106-1126 (FFVFSVIFLYIFILFIMLYPV). Residues 1127-1143 (ASVDQVLQIVCVPYQWR) are Lumenal-facing. Residues 1144-1164 (VTMLIIVLVNAFVSITVEESV) traverse the membrane as a helical segment. Topologically, residues 1165-1226 (DRWGKCCLPW…NGSCQIITIT (62 aa)) are cytoplasmic.

The protein belongs to the cation transport ATPase (P-type) (TC 3.A.3) family. Type V subfamily. Broadly expressed.

Its subcellular location is the recycling endosome membrane. It is found in the early endosome membrane. The protein resides in the late endosome membrane. It catalyses the reaction putrescine(out) + ATP + H2O = putrescine(in) + ADP + phosphate + H(+). Its function is as follows. ATP-driven pump involved in endocytosis-dependent polyamine transport. Uses ATP as an energy source to transfer polyamine precursor putrescine from the endosomal compartment to the cytosol. The sequence is that of Polyamine-transporting ATPase 13A3 from Homo sapiens (Human).